The following is a 499-amino-acid chain: Glycerol kinase (499 aa).

Position 12 (Thr12) interacts with ADP. ATP-binding residues include Thr12, Thr13, and Ser14. Thr12 is a binding site for sn-glycerol 3-phosphate. Arg16 is an ADP binding site. Sn-glycerol 3-phosphate is bound by residues Arg82, Glu83, Tyr135, and Asp245. Glycerol-binding residues include Arg82, Glu83, Tyr135, Asp245, and Gln246. Positions 267 and 310 each coordinate ADP. Thr267, Gly310, Gln314, and Gly411 together coordinate ATP. Residues Gly411 and Asn415 each coordinate ADP.

It belongs to the FGGY kinase family. As to quaternary structure, homotetramer and homodimer (in equilibrium).

The enzyme catalyses glycerol + ATP = sn-glycerol 3-phosphate + ADP + H(+). Its pathway is polyol metabolism; glycerol degradation via glycerol kinase pathway; sn-glycerol 3-phosphate from glycerol: step 1/1. Its activity is regulated as follows. Activated by phosphorylation and inhibited by fructose 1,6-bisphosphate (FBP). In terms of biological role, key enzyme in the regulation of glycerol uptake and metabolism. Catalyzes the phosphorylation of glycerol to yield sn-glycerol 3-phosphate. The polypeptide is Glycerol kinase (Clostridium beijerinckii (strain ATCC 51743 / NCIMB 8052) (Clostridium acetobutylicum)).